Consider the following 338-residue polypeptide: tRNA N6-adenosine threonylcarbamoyltransferase (338 aa).

Fe cation is bound by residues His-114 and His-118. Substrate-binding positions include 137–141, Asp-170, Gly-183, Asp-187, and Asn-277; that span reads IVSGG. Asp-305 provides a ligand contact to Fe cation.

The protein belongs to the KAE1 / TsaD family. It depends on Fe(2+) as a cofactor.

It localises to the cytoplasm. It carries out the reaction L-threonylcarbamoyladenylate + adenosine(37) in tRNA = N(6)-L-threonylcarbamoyladenosine(37) in tRNA + AMP + H(+). Functionally, required for the formation of a threonylcarbamoyl group on adenosine at position 37 (t(6)A37) in tRNAs that read codons beginning with adenine. Is involved in the transfer of the threonylcarbamoyl moiety of threonylcarbamoyl-AMP (TC-AMP) to the N6 group of A37, together with TsaE and TsaB. TsaD likely plays a direct catalytic role in this reaction. The protein is tRNA N6-adenosine threonylcarbamoyltransferase of Clostridioides difficile (strain 630) (Peptoclostridium difficile).